A 155-amino-acid chain; its full sequence is Ribosome maturation factor RimP (155 aa).

It belongs to the RimP family.

It localises to the cytoplasm. In terms of biological role, required for maturation of 30S ribosomal subunits. The sequence is that of Ribosome maturation factor RimP from Staphylococcus aureus (strain JH9).